The chain runs to 95 residues: CRISPR-associated endoribonuclease Cas2 1 (95 aa).

Position 8 (D8) interacts with Mg(2+).

This sequence belongs to the CRISPR-associated endoribonuclease Cas2 protein family. In terms of assembly, homodimer, forms a heterotetramer with a Cas1 homodimer. Mg(2+) serves as cofactor.

Functionally, CRISPR (clustered regularly interspaced short palindromic repeat), is an adaptive immune system that provides protection against mobile genetic elements (viruses, transposable elements and conjugative plasmids). CRISPR clusters contain sequences complementary to antecedent mobile elements and target invading nucleic acids. CRISPR clusters are transcribed and processed into CRISPR RNA (crRNA). Functions as a ssRNA-specific endoribonuclease. Involved in the integration of spacer DNA into the CRISPR cassette. This Pyrobaculum aerophilum (strain ATCC 51768 / DSM 7523 / JCM 9630 / CIP 104966 / NBRC 100827 / IM2) protein is CRISPR-associated endoribonuclease Cas2 1.